A 153-amino-acid polypeptide reads, in one-letter code: MTHDNKLQVEAIKRGTVIDHIPAQIGFKLLTLFKLTETDQRITIGLNLPSGEMGRKDLIKIENTFLTDEQVNQLSLYAPDATVNRIDDYEVVGKSRPNLPERIDTVLVCPNSNCISHAEPVSSSFAVKKREKDIALKCKYCEKEFSHYVVLAN.

Positions 109, 114, 138, and 141 each coordinate Zn(2+).

It belongs to the PyrI family. As to quaternary structure, contains catalytic and regulatory chains. Zn(2+) is required as a cofactor.

Functionally, involved in allosteric regulation of aspartate carbamoyltransferase. The protein is Aspartate carbamoyltransferase regulatory chain of Enterobacter sp. (strain 638).